Consider the following 598-residue polypeptide: Kinetochore-associated protein KNL-2 homolog (598 aa).

Residues 19–111 form the SANTA domain; the sequence is VVLRDWWLIK…IFGFPPCWER (93 aa). 2 stretches are compositionally biased toward basic and acidic residues: residues 335–344 and 371–381; these read AKSSKPEKKG and KSAENKRKIDA. Disordered stretches follow at residues 335–403, 445–500, 520–542, and 572–598; these read AKSS…NNAK, KESL…EEAE, PEKK…QKRS, and KDGS…LKIK. Polar residues predominate over residues 383–392; that stretch reads KLQSPTSNVA. A compositionally biased stretch (polar residues) spans 527–539; sequence QKTNAASTDSLGQ. The tract at residues 538 to 572 is required for localization at centromeres; the sequence is GQKRSRSGRVLVSSLEFWRNQIPVYDMDRNLIQVK.

This sequence belongs to the KNL2 family. In terms of tissue distribution, expressed in shoot apical meristem, leaf primordia, basal parts of emerging leaves, inflorescence meristems, young inflorescences, developing flower buds, developing sepals and pistils, styles and young siliques.

The protein localises to the nucleus. It localises to the nucleoplasm. The protein resides in the nuclear body. Its subcellular location is the nucleolus. It is found in the chromosome. The protein localises to the centromere. In terms of biological role, involved in recognition of centromeres and centromeric localization of the centromere-specific histone CENH3. Required for normal progression of mitosis and meiosis. May play a role in the determination of the epigenetic status of centromeres. Binds DNA and RNA in vitro. The protein is Kinetochore-associated protein KNL-2 homolog of Arabidopsis thaliana (Mouse-ear cress).